The chain runs to 188 residues: Accessory gene regulator protein B (188 aa).

The next 4 helical transmembrane spans lie at 49-69 (VALI…YFLV), 100-122 (VYFQ…LIIY), 143-163 (LLSI…PEPF), and 164-184 (KQLI…IFFP).

The protein belongs to the AgrB family.

The protein localises to the cell membrane. Functionally, essential for the production of a quorum sensing system signal molecule, the autoinducing peptide (AIP). This quorum sensing system is responsible for the regulation of the expression of virulence factor genes. Involved in the proteolytic processing of AgrD, the precursor of AIP. This is Accessory gene regulator protein B from Staphylococcus haemolyticus (strain JCSC1435).